The primary structure comprises 401 residues: Probable sodium/metabolite cotransporter BASS1, chloroplastic (401 aa).

A chloroplast-targeting transit peptide spans 1 to 70 (MASAISLSLL…RRSRFDFVPR (70 aa)). 9 helical membrane passes run 92–112 (FVGE…CLLG), 122–142 (VTPN…GMTL), 156–176 (ELFA…FFVS), 187–207 (AGLI…VTYI), 212–232 (VALS…MTPL), 247–267 (LGLL…GAFL), 278–298 (VSPV…GYAI), 311–331 (QVVL…YLFS), and 371–391 (VPCA…AGIW).

The protein belongs to the bile acid:sodium symporter (BASS) (TC 2.A.28) family.

Its subcellular location is the membrane. It is found in the plastid. The protein localises to the chloroplast envelope. Functionally, may function as sodium-coupled metabolite transporter across the chloroplast envelope. This chain is Probable sodium/metabolite cotransporter BASS1, chloroplastic (BASS1), found in Arabidopsis thaliana (Mouse-ear cress).